The chain runs to 589 residues: ATP-dependent lipid A-core flippase (589 aa).

The next 6 membrane-spanning stretches (helical) occupy residues 33–53, 70–90, 148–168, 170–190, 262–282, and 283–303; these read VLAIVCMVLAAAGQAAFAWII, LWVPATLVGIFLFHGVTTFAS, VVVLVRDTFTVIFLLAYMTYL, GWLVMIVFGLGPLVAVVVTAA, LGAVIALAIILYLATMDVILE, and TISPGGMISFIAAMLLMLPPL. The ABC transmembrane type-1 domain maps to 33 to 315; it reads VLAIVCMVLA…VIGVNAEIQK (283 aa). Positions 347–583 constitute an ABC transporter domain; sequence IEFDRVAFRY…NGHYASLHRV (237 aa). 381–388 is a binding site for ATP; sequence GRSGSGKT.

The protein belongs to the ABC transporter superfamily. Lipid exporter (TC 3.A.1.106) family. As to quaternary structure, homodimer.

The protein resides in the cell inner membrane. The enzyme catalyses ATP + H2O + lipid A-core oligosaccharideSide 1 = ADP + phosphate + lipid A-core oligosaccharideSide 2.. In terms of biological role, involved in lipopolysaccharide (LPS) biosynthesis. Translocates lipid A-core from the inner to the outer leaflet of the inner membrane. Transmembrane domains (TMD) form a pore in the inner membrane and the ATP-binding domain (NBD) is responsible for energy generation. The protein is ATP-dependent lipid A-core flippase of Alkalilimnicola ehrlichii (strain ATCC BAA-1101 / DSM 17681 / MLHE-1).